The primary structure comprises 591 residues: Aspartate--tRNA ligase (591 aa).

An L-aspartate-binding site is contributed by E176. Residues 200 to 203 (QILK) are aspartate. R222 provides a ligand contact to L-aspartate. Residues 222-224 (RDE) and Q231 contribute to the ATP site. H450 is an L-aspartate binding site. E484 lines the ATP pocket. Residue R491 coordinates L-aspartate. 536–539 (GLDR) provides a ligand contact to ATP.

Belongs to the class-II aminoacyl-tRNA synthetase family. Type 1 subfamily. Homodimer.

The protein resides in the cytoplasm. It carries out the reaction tRNA(Asp) + L-aspartate + ATP = L-aspartyl-tRNA(Asp) + AMP + diphosphate. Functionally, catalyzes the attachment of L-aspartate to tRNA(Asp) in a two-step reaction: L-aspartate is first activated by ATP to form Asp-AMP and then transferred to the acceptor end of tRNA(Asp). This chain is Aspartate--tRNA ligase, found in Listeria monocytogenes serotype 4a (strain HCC23).